The following is a 59-amino-acid chain: Large ribosomal subunit protein uL30 (59 aa).

This sequence belongs to the universal ribosomal protein uL30 family. Part of the 50S ribosomal subunit.

This is Large ribosomal subunit protein uL30 from Nocardia farcinica (strain IFM 10152).